The following is a 373-amino-acid chain: Chorismate synthase (373 aa).

Arg-46 serves as a coordination point for NADP(+). FMN is bound by residues 123 to 125 (RSS), 251 to 252 (NA), Gly-295, 310 to 314 (KPTPS), and Arg-337.

The protein belongs to the chorismate synthase family. Requires FMNH2 as cofactor.

It carries out the reaction 5-O-(1-carboxyvinyl)-3-phosphoshikimate = chorismate + phosphate. It participates in metabolic intermediate biosynthesis; chorismate biosynthesis; chorismate from D-erythrose 4-phosphate and phosphoenolpyruvate: step 7/7. Its function is as follows. Catalyzes the anti-1,4-elimination of the C-3 phosphate and the C-6 proR hydrogen from 5-enolpyruvylshikimate-3-phosphate (EPSP) to yield chorismate, which is the branch point compound that serves as the starting substrate for the three terminal pathways of aromatic amino acid biosynthesis. This reaction introduces a second double bond into the aromatic ring system. In Methanococcus maripaludis (strain C7 / ATCC BAA-1331), this protein is Chorismate synthase.